The chain runs to 65 residues: Kappa-scoloptoxin(04)-Ssd1a (65 aa).

The signal sequence occupies residues 1–24 (MKKTCVVSVFLVLLLLKFHDLSMG). Residues 25-36 (EEISPLKKVAPR) constitute a propeptide that is removed on maturation. Disulfide bonds link Cys42–Cys53 and Cys47–Cys60.

Expressed by the venom gland.

Its subcellular location is the secreted. In terms of biological role, voltage-gated potassium channel inhibitor. The protein is Kappa-scoloptoxin(04)-Ssd1a of Scolopendra dehaani (Thai centipede).